The following is a 421-amino-acid chain: Tryptophan synthase beta chain (421 aa).

At Lys110 the chain carries N6-(pyridoxal phosphate)lysine.

Belongs to the TrpB family. As to quaternary structure, tetramer of two alpha and two beta chains. Pyridoxal 5'-phosphate serves as cofactor.

The enzyme catalyses (1S,2R)-1-C-(indol-3-yl)glycerol 3-phosphate + L-serine = D-glyceraldehyde 3-phosphate + L-tryptophan + H2O. The protein operates within amino-acid biosynthesis; L-tryptophan biosynthesis; L-tryptophan from chorismate: step 5/5. Its function is as follows. The beta subunit is responsible for the synthesis of L-tryptophan from indole and L-serine. The chain is Tryptophan synthase beta chain (trpB) from Mycobacterium intracellulare.